A 122-amino-acid polypeptide reads, in one-letter code: Large ribosomal subunit protein uL14 (122 aa).

It belongs to the universal ribosomal protein uL14 family. In terms of assembly, part of the 50S ribosomal subunit. Forms a cluster with proteins L3 and L19. In the 70S ribosome, L14 and L19 interact and together make contacts with the 16S rRNA in bridges B5 and B8.

Functionally, binds to 23S rRNA. Forms part of two intersubunit bridges in the 70S ribosome. This is Large ribosomal subunit protein uL14 from Chlamydia pneumoniae (Chlamydophila pneumoniae).